The sequence spans 378 residues: Cobalt-precorrin-5B C(1)-methyltransferase (378 aa).

Belongs to the CbiD family.

The enzyme catalyses Co-precorrin-5B + S-adenosyl-L-methionine = Co-precorrin-6A + S-adenosyl-L-homocysteine. The protein operates within cofactor biosynthesis; adenosylcobalamin biosynthesis; cob(II)yrinate a,c-diamide from sirohydrochlorin (anaerobic route): step 6/10. Functionally, catalyzes the methylation of C-1 in cobalt-precorrin-5B to form cobalt-precorrin-6A. In Photorhabdus laumondii subsp. laumondii (strain DSM 15139 / CIP 105565 / TT01) (Photorhabdus luminescens subsp. laumondii), this protein is Cobalt-precorrin-5B C(1)-methyltransferase.